The following is an 860-amino-acid chain: Transcription factor E2F8 (860 aa).

The interval 1-114 (MENQKENLFS…NEKSQPSRKE (114 aa)) is disordered. At serine 71 the chain carries Phosphoserine. 2 stretches are compositionally biased toward basic and acidic residues: residues 74-84 (IRSRDQKRGLS) and 92-114 (EARD…SRKE). 2 consecutive DNA-binding regions follow at residues 112–181 (RKEK…TWHG) and 261–347 (RKDK…KWTG). Disordered regions lie at residues 407–433 (RRKI…PPVP) and 533–616 (TPPH…PKED). Positions 411-426 (SSAPSSPVKSSKAESS) are enriched in low complexity. Phosphoserine is present on residues serine 412 and serine 416. A compositionally biased stretch (polar residues) spans 542-554 (VCPTQSSNATGSK). 2 stretches are compositionally biased toward basic and acidic residues: residues 555-565 (DPTDAPTEKTA) and 586-596 (RSKETTGDRGT).

This sequence belongs to the E2F/DP family. In terms of assembly, homodimer and heterodimer: mainly forms homodimers and, to a lesser extent, heterodimers with E2F8. Dimerization is important for DNA-binding. Interacts with HIF1A.

The protein localises to the nucleus. Its function is as follows. Atypical E2F transcription factor that participates in various processes such as angiogenesis and polyploidization of specialized cells. Mainly acts as a transcription repressor that binds DNA independently of DP proteins and specifically recognizes the E2 recognition site 5'-TTTC[CG]CGC-3'. Directly represses transcription of classical E2F transcription factors such as E2F1: component of a feedback loop in S phase by repressing the expression of E2F1, thereby preventing p53/TP53-dependent apoptosis. Plays a key role in polyploidization of cells in placenta and liver by regulating the endocycle, probably by repressing genes promoting cytokinesis and antagonizing action of classical E2F proteins (E2F1, E2F2 and/or E2F3). Required for placental development by promoting polyploidization of trophoblast giant cells. Acts as a promoter of sprouting angiogenesis, possibly by acting as a transcription activator: associates with HIF1A, recognizes and binds the VEGFA promoter, which is different from canonical E2 recognition site, and activates expression of the VEGFA gene. This is Transcription factor E2F8 (E2f8) from Rattus norvegicus (Rat).